Consider the following 209-residue polypeptide: Probable nicotinate-nucleotide adenylyltransferase (209 aa).

The protein belongs to the NadD family.

The enzyme catalyses nicotinate beta-D-ribonucleotide + ATP + H(+) = deamido-NAD(+) + diphosphate. It participates in cofactor biosynthesis; NAD(+) biosynthesis; deamido-NAD(+) from nicotinate D-ribonucleotide: step 1/1. Its function is as follows. Catalyzes the reversible adenylation of nicotinate mononucleotide (NaMN) to nicotinic acid adenine dinucleotide (NaAD). The chain is Probable nicotinate-nucleotide adenylyltransferase from Hydrogenovibrio crunogenus (strain DSM 25203 / XCL-2) (Thiomicrospira crunogena).